The sequence spans 338 residues: Ketol-acid reductoisomerase (NADP(+)) (338 aa).

The 181-residue stretch at 1 to 181 (MNVFYDKDAD…GGGRAGIIET (181 aa)) folds into the KARI N-terminal Rossmann domain. NADP(+) contacts are provided by residues 24 to 27 (YGSQ), Arg-47, and Ser-52. His-107 is a catalytic residue. Residue Gly-133 participates in NADP(+) binding. The KARI C-terminal knotted domain maps to 182-327 (NFREETETDL…AKLRAMMPWI (146 aa)). Mg(2+)-binding residues include Asp-190, Glu-194, Glu-226, and Glu-230. Ser-251 contacts substrate.

Belongs to the ketol-acid reductoisomerase family. Mg(2+) serves as cofactor.

The catalysed reaction is (2R)-2,3-dihydroxy-3-methylbutanoate + NADP(+) = (2S)-2-acetolactate + NADPH + H(+). It carries out the reaction (2R,3R)-2,3-dihydroxy-3-methylpentanoate + NADP(+) = (S)-2-ethyl-2-hydroxy-3-oxobutanoate + NADPH + H(+). The protein operates within amino-acid biosynthesis; L-isoleucine biosynthesis; L-isoleucine from 2-oxobutanoate: step 2/4. Its pathway is amino-acid biosynthesis; L-valine biosynthesis; L-valine from pyruvate: step 2/4. In terms of biological role, involved in the biosynthesis of branched-chain amino acids (BCAA). Catalyzes an alkyl-migration followed by a ketol-acid reduction of (S)-2-acetolactate (S2AL) to yield (R)-2,3-dihydroxy-isovalerate. In the isomerase reaction, S2AL is rearranged via a Mg-dependent methyl migration to produce 3-hydroxy-3-methyl-2-ketobutyrate (HMKB). In the reductase reaction, this 2-ketoacid undergoes a metal-dependent reduction by NADPH to yield (R)-2,3-dihydroxy-isovalerate. This chain is Ketol-acid reductoisomerase (NADP(+)), found in Burkholderia cenocepacia (strain ATCC BAA-245 / DSM 16553 / LMG 16656 / NCTC 13227 / J2315 / CF5610) (Burkholderia cepacia (strain J2315)).